The sequence spans 410 residues: LL-diaminopimelate aminotransferase (410 aa).

2 residues coordinate substrate: Tyr15 and Gly42. Pyridoxal 5'-phosphate contacts are provided by residues Tyr72, 108–109 (SK), Tyr132, Asn187, Tyr218, and 246–248 (SFS). Residues Lys109, Tyr132, and Asn187 each coordinate substrate. Lys249 carries the post-translational modification N6-(pyridoxal phosphate)lysine. Pyridoxal 5'-phosphate is bound by residues Arg257 and Asn292. 2 residues coordinate substrate: Asn292 and Arg388.

The protein belongs to the class-I pyridoxal-phosphate-dependent aminotransferase family. LL-diaminopimelate aminotransferase subfamily. In terms of assembly, homodimer. Requires pyridoxal 5'-phosphate as cofactor.

The enzyme catalyses (2S,6S)-2,6-diaminopimelate + 2-oxoglutarate = (S)-2,3,4,5-tetrahydrodipicolinate + L-glutamate + H2O + H(+). It participates in amino-acid biosynthesis; L-lysine biosynthesis via DAP pathway; LL-2,6-diaminopimelate from (S)-tetrahydrodipicolinate (aminotransferase route): step 1/1. Functionally, involved in the synthesis of meso-diaminopimelate (m-DAP or DL-DAP), required for both lysine and peptidoglycan biosynthesis. Catalyzes the direct conversion of tetrahydrodipicolinate to LL-diaminopimelate. The sequence is that of LL-diaminopimelate aminotransferase from Geotalea uraniireducens (strain Rf4) (Geobacter uraniireducens).